The following is a 408-amino-acid chain: Methyltransferase/ribosomally synthesized type I borosin cyclic peptide precursor sveMA (408 aa).

The methyltransferase domain stretch occupies residues 1 to 250 (MASSTHPKRG…TSSTFYIPPR (250 aa)). Active-site residues include arginine 73, tyrosine 77, and tyrosine 99. S-adenosyl-L-methionine-binding residues include tyrosine 99, histidine 101, isoleucine 104, alanine 131, glutamine 173, glycine 211, serine 242, and threonine 244. Residues 251–375 (DSEAIDYDMV…GSVYKVMSAT (125 aa)) form a clasp domain region. Residues 371-385 (VMSATQADIELGKEP) form a precursor leader region. At valine 401 the chain carries N-methylvaline. At isoleucine 402 the chain carries N-methylisoleucine. Valine 406 bears the N-methylvaline mark.

In the N-terminal section; belongs to the precorrin methyltransferase family. As to quaternary structure, homodimer. In terms of processing, sveMA automethylates at Val-401, Ile-402 and Val-406 before being processed by a prolyloligopeptidase which likely forms a peptidyl ester upon removal of the follower propeptide, which then undergoes macrocyclization with the N-terminus of the modified core peptide. Peptide backbone alpha-N-methylations change the physicochemical properties of amide bonds to provide structural constraints and other favorable characteristics including biological membrane permeability to peptides.

The protein operates within secondary metabolite biosynthesis. Functionally, fusion protein of the methyltransferase sveM and a type I borosin core peptide; part of the gene cluster that mediates the biosynthesis of a type I borosin, a highly methylated cyclic peptide with potent biological activities. Type I borosins derive from the C-terminus of the fusion protein, and it is the same protein that methylates its own C-terminus using S-adenosyl methionine (SAM). The C-terminus is subsequently cleaved off and macrocyclized by a prolyloligopeptidase to give the final product. This Serendipita vermifera subsp. bescii (Mycorrhizal fungus) protein is Methyltransferase/ribosomally synthesized type I borosin cyclic peptide precursor sveMA.